We begin with the raw amino-acid sequence, 136 residues long: Gonadotropin subunit beta-2 (136 aa).

A signal peptide spans 1 to 21 (MVCLFLGASSFIWSLAPAAAA). Cystine bridges form between Cys-27–Cys-75, Cys-41–Cys-90, Cys-44–Cys-128, Cys-52–Cys-106, Cys-56–Cys-108, and Cys-111–Cys-118. N-linked (GlcNAc...) asparagine glycosylation occurs at Asn-31.

The protein belongs to the glycoprotein hormones subunit beta family. As to quaternary structure, heterodimer of an alpha and a beta chain.

The protein resides in the secreted. Functionally, involved in gametogenesis and steroidogenesis. The protein is Gonadotropin subunit beta-2 (cgbb) of Fundulus heteroclitus (Killifish).